Here is a 156-residue protein sequence, read N- to C-terminus: Small ribosomal subunit protein uS7 (156 aa).

This sequence belongs to the universal ribosomal protein uS7 family. Part of the 30S ribosomal subunit. Contacts proteins S9 and S11.

Its function is as follows. One of the primary rRNA binding proteins, it binds directly to 16S rRNA where it nucleates assembly of the head domain of the 30S subunit. Is located at the subunit interface close to the decoding center, probably blocks exit of the E-site tRNA. The chain is Small ribosomal subunit protein uS7 from Prochlorococcus marinus (strain SARG / CCMP1375 / SS120).